A 425-amino-acid chain; its full sequence is Threonine synthase (425 aa).

Lysine 105 carries the post-translational modification N6-(pyridoxal phosphate)lysine.

This sequence belongs to the threonine synthase family. It depends on pyridoxal 5'-phosphate as a cofactor.

The enzyme catalyses O-phospho-L-homoserine + H2O = L-threonine + phosphate. It participates in amino-acid biosynthesis; L-threonine biosynthesis; L-threonine from L-aspartate: step 5/5. Catalyzes the gamma-elimination of phosphate from L-phosphohomoserine and the beta-addition of water to produce L-threonine. The chain is Threonine synthase (thrC) from Haemophilus influenzae (strain ATCC 51907 / DSM 11121 / KW20 / Rd).